Here is a 620-residue protein sequence, read N- to C-terminus: Proline--tRNA ligase (620 aa).

Belongs to the class-II aminoacyl-tRNA synthetase family. ProS type 1 subfamily. Homodimer.

It is found in the cytoplasm. The catalysed reaction is tRNA(Pro) + L-proline + ATP = L-prolyl-tRNA(Pro) + AMP + diphosphate. Its function is as follows. Catalyzes the attachment of proline to tRNA(Pro) in a two-step reaction: proline is first activated by ATP to form Pro-AMP and then transferred to the acceptor end of tRNA(Pro). As ProRS can inadvertently accommodate and process non-cognate amino acids such as alanine and cysteine, to avoid such errors it has two additional distinct editing activities against alanine. One activity is designated as 'pretransfer' editing and involves the tRNA(Pro)-independent hydrolysis of activated Ala-AMP. The other activity is designated 'posttransfer' editing and involves deacylation of mischarged Ala-tRNA(Pro). The misacylated Cys-tRNA(Pro) is not edited by ProRS. This chain is Proline--tRNA ligase, found in Streptococcus suis (strain 98HAH33).